A 637-amino-acid chain; its full sequence is Threonine--tRNA ligase (637 aa).

Positions 1–61 (MPNVKLPDGN…KEDCSLIIVT (61 aa)) constitute a TGS domain. The segment at 242–533 (DHRKLGKALD…LIEHYAGKLP (292 aa)) is catalytic. Zn(2+) contacts are provided by cysteine 333, histidine 384, and histidine 510.

Belongs to the class-II aminoacyl-tRNA synthetase family. Homodimer. The cofactor is Zn(2+).

The protein localises to the cytoplasm. It catalyses the reaction tRNA(Thr) + L-threonine + ATP = L-threonyl-tRNA(Thr) + AMP + diphosphate + H(+). In terms of biological role, catalyzes the attachment of threonine to tRNA(Thr) in a two-step reaction: L-threonine is first activated by ATP to form Thr-AMP and then transferred to the acceptor end of tRNA(Thr). Also edits incorrectly charged L-seryl-tRNA(Thr). The sequence is that of Threonine--tRNA ligase from Legionella pneumophila (strain Corby).